The sequence spans 283 residues: MASLGQIIFWSIINIIIILAGAIALIIGFGISGKHFITVTTFTSAGNIGEDGTLSCTFEPDIKLNGIVIQWLKEGIKGLVHEFKEGKDDLSQQHEMFRGRTAVFADQVVVGNASLRLKNVQLTDAGTYTCYIRTSKGKGNANLEYKTGAFSMPEINVDYNASSESLRCEAPRWFPQPTVAWASQVDQGANFSEVSNTSFELNSENVTMKVVSVLYNVTINNTYSCMIENDIAKATGDIKVTDSEVKRRSQLQLLNSGPSPCVFSSAFVAGWALLSLSCCLMLR.

An N-terminal signal peptide occupies residues 1–24; sequence MASLGQIIFWSIINIIIILAGAIA. Ig-like V-type domains are found at residues 35-144 and 153-241; these read HFIT…ANLE and PEIN…IKVT. Disulfide bonds link C56-C130 and C168-C225. N216 carries N-linked (GlcNAc...) asparagine glycosylation. G257 carries the GPI-anchor amidated glycine lipid modification. Positions 258–283 are cleaved as a propeptide — removed in mature form; sequence PSPCVFSSAFVAGWALLSLSCCLMLR.

Belongs to the immunoglobulin superfamily. BTN/MOG family. Post-translationally, N-glycosylated. As to expression, expressed on the surface of professional antigen-presenting cells (at protein level). Widely expressed, including in kidney, liver, lung, pancreas, placenta, prostate, spleen, testis and thymus.

Its subcellular location is the cell membrane. Functionally, negatively regulates T-cell-mediated immune response by inhibiting T-cell activation, proliferation, cytokine production and development of cytotoxicity. When expressed on the cell surface of tumor macrophages, plays an important role, together with regulatory T-cells (Treg), in the suppression of tumor-associated antigen-specific T-cell immunity. Involved in promoting epithelial cell transformation. This is V-set domain containing T-cell activation inhibitor 1 from Mus musculus (Mouse).